The sequence spans 343 residues: Phosphate acyltransferase (343 aa).

The protein belongs to the PlsX family. In terms of assembly, homodimer. Probably interacts with PlsY.

The protein resides in the cytoplasm. The catalysed reaction is a fatty acyl-[ACP] + phosphate = an acyl phosphate + holo-[ACP]. It functions in the pathway lipid metabolism; phospholipid metabolism. Functionally, catalyzes the reversible formation of acyl-phosphate (acyl-PO(4)) from acyl-[acyl-carrier-protein] (acyl-ACP). This enzyme utilizes acyl-ACP as fatty acyl donor, but not acyl-CoA. The sequence is that of Phosphate acyltransferase from Halorhodospira halophila (strain DSM 244 / SL1) (Ectothiorhodospira halophila (strain DSM 244 / SL1)).